The chain runs to 226 residues: Cytidylate kinase (226 aa).

Residue Gly14–Thr22 participates in ATP binding.

Belongs to the cytidylate kinase family. Type 1 subfamily.

The protein resides in the cytoplasm. It catalyses the reaction CMP + ATP = CDP + ADP. The enzyme catalyses dCMP + ATP = dCDP + ADP. The chain is Cytidylate kinase from Symbiobacterium thermophilum (strain DSM 24528 / JCM 14929 / IAM 14863 / T).